Here is a 217-residue protein sequence, read N- to C-terminus: LexA repressor (217 aa).

Residues 26-46 constitute a DNA-binding region (H-T-H motif); sequence FEEMKLALDLKSKSGIHRLIK. Residues serine 138 and lysine 176 each act as for autocatalytic cleavage activity in the active site.

The protein belongs to the peptidase S24 family. In terms of assembly, homodimer.

The enzyme catalyses Hydrolysis of Ala-|-Gly bond in repressor LexA.. In terms of biological role, represses a number of genes involved in the response to DNA damage (SOS response), including recA and lexA. In the presence of single-stranded DNA, RecA interacts with LexA causing an autocatalytic cleavage which disrupts the DNA-binding part of LexA, leading to derepression of the SOS regulon and eventually DNA repair. The polypeptide is LexA repressor (Zymomonas mobilis subsp. mobilis (strain ATCC 31821 / ZM4 / CP4)).